The following is a 59-amino-acid chain: Single-pass membrane and coiled-coil domain-containing protein 4 (59 aa).

A disordered region spans residues 1–23; that stretch reads MRQLKGKPKKETSKDKRERKQAM. Residues 9–23 are compositionally biased toward basic and acidic residues; it reads KKETSKDKRERKQAM. A coiled-coil region spans residues 9-30; it reads KKETSKDKRERKQAMQDARKQV. Residues 32-52 traverse the membrane as a helical segment; it reads TVVLPTVAVVVLLIVFFVYAA.

This sequence belongs to the SMCO4 family.

The protein resides in the membrane. This is Single-pass membrane and coiled-coil domain-containing protein 4 (smco4) from Takifugu rubripes (Japanese pufferfish).